The sequence spans 559 residues: Subtelomeric hrmA-associated cluster protein AFUB_079030 (559 aa).

Disordered regions lie at residues A163–E190, R298–A351, S427–S451, and F525–V559. A compositionally biased stretch (low complexity) spans G169–G179. Basic and acidic residues-rich tracts occupy residues K180 to P189 and S300 to R325. Residues N336–E346 show a composition bias toward polar residues.

Functionally, part of the subtelomeric hrmA-associated cluster (HAC) containing genes that alter the hyphal surface (such as reduced total chitin or increased beta-glucan exposure) and perturb inter-hyphal interactions within the developing biofilms, resulting in a loss of vertically aligned polarized growing filaments. Consequently, this hypoxia-typic morphotype (called H-MORPH) with altered biofilm architecture leads to increased hypoxia fitness, increased host inflammation, rapid disease progression, and mortality in a murine model of invasive aspergillosis. The protein is Subtelomeric hrmA-associated cluster protein AFUB_079030 of Aspergillus fumigatus (strain CBS 144.89 / FGSC A1163 / CEA10) (Neosartorya fumigata).